The primary structure comprises 126 residues: Holo-[acyl-carrier-protein] synthase (126 aa).

The Mg(2+) site is built by Asp9 and Glu58.

The protein belongs to the P-Pant transferase superfamily. AcpS family. Requires Mg(2+) as cofactor.

The protein resides in the cytoplasm. It catalyses the reaction apo-[ACP] + CoA = holo-[ACP] + adenosine 3',5'-bisphosphate + H(+). In terms of biological role, transfers the 4'-phosphopantetheine moiety from coenzyme A to a Ser of acyl-carrier-protein. In Pectobacterium carotovorum subsp. carotovorum (strain PC1), this protein is Holo-[acyl-carrier-protein] synthase.